Consider the following 201-residue polypeptide: Lipopolysaccharide core heptose(II)-phosphate phosphatase (201 aa).

Residues 1–35 (MLAFTLRFIKNKRYLATLAGALVIIAGLTSQHAWS) form the signal peptide.

This sequence belongs to the phosphoglycerate mutase family. Ais subfamily.

The protein resides in the periplasm. The protein operates within bacterial outer membrane biogenesis; lipopolysaccharide metabolism. Its function is as follows. Catalyzes the dephosphorylation of heptose(II) of the outer membrane lipopolysaccharide core. The protein is Lipopolysaccharide core heptose(II)-phosphate phosphatase of Salmonella heidelberg (strain SL476).